The chain runs to 974 residues: Receptor-like protein 7 (974 aa).

Residues 1 to 24 (MSFLIRSICFLILIPSFLITFVSA) form the signal peptide. Residues 25–930 (TQHLCHSDQK…EEEEEESFSW (906 aa)) are Extracellular-facing. N-linked (GlcNAc...) asparagine glycosylation is found at asparagine 54 and asparagine 90. LRR repeat units lie at residues 96–120 (LRHL…EFDK), 122–145 (TGLE…LLQL), 147–166 (KLVS…SFHY), 181–204 (LRNL…EFSN), 206–229 (RSLR…ILLI), and 230–252 (PNLQ…VFHE). The N-linked (GlcNAc...) asparagine glycan is linked to asparagine 253. LRR repeat units lie at residues 254–277 (NSLL…ISSL), 278–301 (KNLT…LGNL), 302–325 (SHLS…IGNL), 327–349 (QLTN…LSNL), and 350–373 (TKLN…ISQL). N-linked (GlcNAc...) asparagine glycans are attached at residues asparagine 279 and asparagine 300. N-linked (GlcNAc...) asparagine glycosylation occurs at asparagine 348. Residues 374-396 (SKLKFFFADDNPFIGAILSPLLK) form an LRR 12; degenerate repeat. 18 LRR repeats span residues 397 to 422 (IPSL…IFML), 425 to 448 (LETF…VFSS), 454 to 472 (TLYI…SDFP), 473 to 495 (SNLE…IRKG), 496 to 519 (RNLQ…LWRM), 521 to 542 (TLNS…VKAS), 544 to 570 (ESQL…SLRY), 572 to 589 (SGSN…ICGL), 590 to 616 (SSLE…LMSS), 618 to 638 (SDLD…FMNA), 639 to 662 (TKLR…LTGC), 664 to 685 (SLEV…ELNS), 687 to 712 (QKLQ…VWFG), 713 to 737 (FPQL…YFMN), 785 to 809 (LTIY…IGLL), 810 to 833 (KELR…LANL), 834 to 857 (KNLE…LGTL), and 859 to 882 (SLAW…QFQR). N-linked (GlcNAc...) asparagine glycans are attached at residues asparagine 434, asparagine 466, and asparagine 484. A glycan (N-linked (GlcNAc...) asparagine) is linked at asparagine 529. Asparagine 577, asparagine 603, asparagine 624, and asparagine 637 each carry an N-linked (GlcNAc...) asparagine glycan. Residue asparagine 737 is glycosylated (N-linked (GlcNAc...) asparagine). N-linked (GlcNAc...) asparagine glycans are attached at residues asparagine 816, asparagine 845, and asparagine 864. Residues 899 to 923 (LENVCGHIKESTPTQTEPLETKEEE) are disordered. A helical transmembrane segment spans residues 931–951 (IAAGLGFAPGVVFGLAMGYIV). Residues 952–974 (VSYKHQWFMKTFGRSKQQNTRTR) lie on the Cytoplasmic side of the membrane.

It belongs to the RLP family.

Its subcellular location is the cell membrane. The polypeptide is Receptor-like protein 7 (Arabidopsis thaliana (Mouse-ear cress)).